A 320-amino-acid chain; its full sequence is Eukaryotic translation initiation factor 3 subunit G (320 aa).

Residues 1–25 (MPTGDFDSKPSWADQVEEEGEDDKC) form a disordered region. Phosphoserine is present on residues Ser-8 and Ser-11. A phosphothreonine mark is found at Thr-38 and Thr-41. Ser-42, Ser-189, Ser-223, and Ser-264 each carry phosphoserine. Residues 209–234 (KTGKYVPPSLRDGASRRGESMQPNRR) are disordered. The span at 221 to 234 (GASRRGESMQPNRR) shows a compositional bias: basic and acidic residues. Positions 239 to 317 (ATIRVTNLSE…LILNVEWAKP (79 aa)) constitute an RRM domain.

Belongs to the eIF-3 subunit G family. As to quaternary structure, component of the eukaryotic translation initiation factor 3 (eIF-3) complex, which is composed of 13 subunits: EIF3A, EIF3B, EIF3C, EIF3D, EIF3E, EIF3F, EIF3G, EIF3H, EIF3I, EIF3J, EIF3K, EIF3L and EIF3M. The eIF-3 complex appears to include 3 stable modules: module A is composed of EIF3A, EIF3B, EIF3G and EIF3I; module B is composed of EIF3F, EIF3H, and EIF3M; and module C is composed of EIF3C, EIF3D, EIF3E, EIF3K and EIF3L. EIF3C of module C binds EIF3B of module A and EIF3H of module B, thereby linking the three modules. EIF3J is a labile subunit that binds to the eIF-3 complex via EIF3B. The eIF-3 complex interacts with RPS6KB1 under conditions of nutrient depletion. Mitogenic stimulation leads to binding and activation of a complex composed of FRAP1 and RAPTOR, leading to phosphorylation and release of RPS6KB1 and binding of EIF4B to eIF-3. Interacts (via C-terminus) with AIFM1 (via N-terminus). Interacts with DHX33; the interaction is independent of RNA. Phosphorylated. Phosphorylation is enhanced upon serum stimulation.

It localises to the cytoplasm. The protein resides in the nucleus. Its subcellular location is the perinuclear region. Functionally, RNA-binding component of the eukaryotic translation initiation factor 3 (eIF-3) complex, which is required for several steps in the initiation of protein synthesis. The eIF-3 complex associates with the 40S ribosome and facilitates the recruitment of eIF-1, eIF-1A, eIF-2:GTP:methionyl-tRNAi and eIF-5 to form the 43S pre-initiation complex (43S PIC). The eIF-3 complex stimulates mRNA recruitment to the 43S PIC and scanning of the mRNA for AUG recognition. The eIF-3 complex is also required for disassembly and recycling of post-termination ribosomal complexes and subsequently prevents premature joining of the 40S and 60S ribosomal subunits prior to initiation. The eIF-3 complex specifically targets and initiates translation of a subset of mRNAs involved in cell proliferation, including cell cycling, differentiation and apoptosis, and uses different modes of RNA stem-loop binding to exert either translational activation or repression. This subunit can bind 18S rRNA. The protein is Eukaryotic translation initiation factor 3 subunit G of Bos taurus (Bovine).